The following is a 296-amino-acid chain: GTP cyclohydrolase FolE2 (296 aa).

The protein belongs to the GTP cyclohydrolase IV family.

The enzyme catalyses GTP + H2O = 7,8-dihydroneopterin 3'-triphosphate + formate + H(+). The protein operates within cofactor biosynthesis; 7,8-dihydroneopterin triphosphate biosynthesis; 7,8-dihydroneopterin triphosphate from GTP: step 1/1. In terms of biological role, converts GTP to 7,8-dihydroneopterin triphosphate. This is GTP cyclohydrolase FolE2 from Delftia acidovorans (strain DSM 14801 / SPH-1).